Consider the following 265-residue polypeptide: Mlc titration factor A (265 aa).

Residues H111, H148, H152, and E211 each contribute to the Zn(2+) site.

It belongs to the MtfA family. Interacts with Mlc. Zn(2+) serves as cofactor.

The protein resides in the cytoplasm. Functionally, involved in the modulation of the activity of the glucose-phosphotransferase system (glucose-PTS). Interacts with the transcriptional repressor Mlc, preventing its interaction with DNA and leading to the modulation of expression of genes regulated by Mlc, including ptsG, which encodes the PTS system glucose-specific EIICB component. Its function is as follows. Shows zinc-dependent metallopeptidase activity. The sequence is that of Mlc titration factor A from Pectobacterium atrosepticum (strain SCRI 1043 / ATCC BAA-672) (Erwinia carotovora subsp. atroseptica).